Reading from the N-terminus, the 120-residue chain is NAD(P)H-quinone oxidoreductase subunit 3, chloroplastic (120 aa).

3 helical membrane passes run 7-27, 64-84, and 89-109; these read YQTF…ALLI, SFAL…PWAM, and LGIF…IGLV.

This sequence belongs to the complex I subunit 3 family. NDH is composed of at least 16 different subunits, 5 of which are encoded in the nucleus.

It localises to the plastid. Its subcellular location is the chloroplast thylakoid membrane. The enzyme catalyses a plastoquinone + NADH + (n+1) H(+)(in) = a plastoquinol + NAD(+) + n H(+)(out). It carries out the reaction a plastoquinone + NADPH + (n+1) H(+)(in) = a plastoquinol + NADP(+) + n H(+)(out). In terms of biological role, NDH shuttles electrons from NAD(P)H:plastoquinone, via FMN and iron-sulfur (Fe-S) centers, to quinones in the photosynthetic chain and possibly in a chloroplast respiratory chain. The immediate electron acceptor for the enzyme in this species is believed to be plastoquinone. Couples the redox reaction to proton translocation, and thus conserves the redox energy in a proton gradient. The sequence is that of NAD(P)H-quinone oxidoreductase subunit 3, chloroplastic from Psilotum nudum (Whisk fern).